The primary structure comprises 279 residues: Monoacylglycerol lipase (279 aa).

The active-site Nucleophile is the Ser-110. Active-site charge relay system residues include Asp-226 and His-256.

Belongs to the AB hydrolase superfamily. Monomer.

The protein resides in the secreted. It localises to the cell wall. The enzyme catalyses a 1-acylglycerol + H2O = glycerol + a fatty acid + H(+). It carries out the reaction Hydrolyzes glycerol monoesters of long-chain fatty acids.. The catalysed reaction is 1-butyrylglycerol + H2O = butanoate + glycerol + H(+). It catalyses the reaction 1-octanoylglycerol + H2O = octanoate + glycerol + H(+). The enzyme catalyses 1-decanoylglycerol + H2O = decanoate + glycerol + H(+). It carries out the reaction 1-dodecanoylglycerol + H2O = dodecanoate + glycerol + H(+). The catalysed reaction is 1-tetradecanoylglycerol + H2O = tetradecanoate + glycerol + H(+). It catalyses the reaction 1-(9Z-octadecenoyl)-glycerol + H2O = glycerol + (9Z)-octadecenoate + H(+). The enzyme catalyses 2-(9Z-octadecenoyl)-glycerol + H2O = glycerol + (9Z)-octadecenoate + H(+). With respect to regulation, inhibited by the serine esterase inhibitors PMSF (100%), E600 (80%) and THL (22%). Virtual screening identified a tautomer of ZINC13451138, known inhibitor for HIV-1 integrase, as a potential inhibitor. Functionally, involved in the hydrolysis of exogenous host lipids during chronic infection. Catalyzes the hydrolysis of both monoacylglycerols (MAG) and diacylglycerols (DAG), with a preference for MAG. It hydrolyzes 2-MAG, 1-3-MAG and MAG with short, medium and long chain fatty acids such as 1-monobutyroyl-rac-glycerol (MC4), 1-mono-octanoyl-rac-glycerol (MC8), 1-monodecanoyl-rac-glycerol (MC10), 1-monolauroyl-rac-glycerol (MC12), 1-monomyristoyl-rac-glycerol (MC14) and 1-mono-oleyl-rac-glycerol (MC18:1). Also able to hydrolyze DAG with short (DiC6) and medium (DiC10) fatty acid chains, but not with longest fatty acid chains. Can also hydrolyze vinyl laurate (VC12), vinyl butyrate (VC4) and vinyl propionate (VC3). Induces an inflammatory response and cell apoptosis in the host cells. Increases expression of IL-6, NF-kappaB, TLR-2, TLR-6, TNF-alpha, and MyD88 in mouse alveolar macrophage RAW264.7 cells. Persistent expression induces RAW264.7 cell apoptosis in vitro. In Mycobacterium tuberculosis (strain ATCC 25618 / H37Rv), this protein is Monoacylglycerol lipase.